A 433-amino-acid polypeptide reads, in one-letter code: Polygalacturonase ADPG2 (433 aa).

Residues Met1–Ala24 form the signal peptide. PbH1 repeat units lie at residues Cys223–Asn249, Thr250–Ser271, Ser273–Ser293, Val303–Thr324, and Ala332–Gln353. Asp264 acts as the Proton donor in catalysis. The active site involves His287.

This sequence belongs to the glycosyl hydrolase 28 family. In terms of tissue distribution, expressed in roots and in the abscission zone of the sepals, petals and stamens of flowers, at the base of cauline leaves and in the basal cell of trichomes from senescing leaves. Found at the site of lateral root emergence, in the dehiscence zone of anthers and maturing siliques. Also expressed early in anther development, at the time of microspore separation. Expressed in germinating seeds, at the point at which the radicle broke through the seed coat. Not expressed at the junction between the seed and the funiculus or in the dehiscence zone of anthers or pods.

Its subcellular location is the secreted. The protein localises to the cell wall. It catalyses the reaction (1,4-alpha-D-galacturonosyl)n+m + H2O = (1,4-alpha-D-galacturonosyl)n + (1,4-alpha-D-galacturonosyl)m.. In terms of biological role, polygalacturonase involved in cell separation in the final stages of pod shatter, in anther dehiscence and in floral organ abscission. The polypeptide is Polygalacturonase ADPG2 (ADPG2) (Arabidopsis thaliana (Mouse-ear cress)).